The chain runs to 484 residues: ATP-dependent RNA helicase DDX25 (484 aa).

The residue at position 49 (Thr-49) is a Phosphothreonine. The short motif at Leu-62–Ser-75 is the Nuclear export signal element. Residues Lys-98–Glu-126 carry the Q motif motif. Positions Glu-101–Ala-115 match the Nuclear localization signal motif. The Helicase ATP-binding domain occupies Met-131–Ile-301. Position 144–151 (Ser-144–Thr-151) interacts with ATP. The DEAD box motif lies at Asp-248 to Asp-251. The region spanning Asn-312–Ile-479 is the Helicase C-terminal domain.

This sequence belongs to the DEAD box helicase family. In terms of processing, phosphorylated on threonine residues. The phosphorylated form is found in the cytoplasm but not in the nucleus. In terms of tissue distribution, isoform 1 is expressed in germ cells. Isoform 2 is expressed in Leydig cells and in round spermatids of adult testis upon gonadotropin stimulation.

The protein resides in the cytoplasm. It localises to the nucleus. It catalyses the reaction ATP + H2O = ADP + phosphate + H(+). Functionally, ATP-dependent RNA helicase. Required for mRNA export and translation regulation during spermatid development. The chain is ATP-dependent RNA helicase DDX25 (Ddx25) from Mus musculus (Mouse).